Reading from the N-terminus, the 74-residue chain is Dermaseptin-B3 (74 aa).

The first 22 residues, 1-22 (MAFLKKSVFLVLFLGLVSLSIC), serve as a signal peptide directing secretion. A propeptide spanning residues 23-43 (EEEKREEENEEKQEDDEQSEE) is cleaved from the precursor.

In terms of tissue distribution, expressed by the skin glands.

The protein resides in the secreted. Its function is as follows. Possesses a potent antimicrobial activity against Gram-positive and Gram-negative bacteria. Probably acts by disturbing membrane functions with its amphipathic structure. The sequence is that of Dermaseptin-B3 from Phyllomedusa bicolor (Two-colored leaf frog).